Here is a 490-residue protein sequence, read N- to C-terminus: Tektin-3 (490 aa).

3 O-linked (GalNAc...) threonine glycosylation sites follow: threonine 7, threonine 9, and threonine 10. Residues asparagine 41, asparagine 86, asparagine 103, asparagine 111, asparagine 276, and asparagine 344 are each glycosylated (N-linked (GlcNAc...) asparagine). A coiled-coil region spans residues 424-451 (VHEVDDTIQTLQQRLRDAEDTLQSLVHI).

The protein belongs to the tektin family. As to quaternary structure, microtubule inner protein component of sperm flagellar doublet microtubules. Interacts with TEKT1, TEKT2, TEKT4 and TEKT5. Interacts with CCDC38. In terms of processing, N- and O-glycosylated. Post-translationally, may be proteolytically processed during the epididymal transit of spermatozoa. Ubiquitinated, leading to its degradation. Deubiquitinated by USP16, promoting its stability. In terms of tissue distribution, expressed in spermatozoa. Expressed in airway epithelial cells.

It localises to the cytoplasm. Its subcellular location is the cytoskeleton. The protein resides in the cilium axoneme. The protein localises to the flagellum axoneme. It is found in the cytoplasmic vesicle. It localises to the secretory vesicle. Its subcellular location is the acrosome outer membrane. Microtubule inner protein (MIP) part of the dynein-decorated doublet microtubules (DMTs) in cilia and flagellar axoneme. Forms filamentous polymers in the walls of ciliary and flagellar microtubules. Required for normal sperm mobility. The sequence is that of Tektin-3 (TEKT3) from Homo sapiens (Human).